The chain runs to 180 residues: MVRESIPKEGENIKIQSYKHDGKIHRVWSETTILKGTDHVVIGGNDHTLVTESDGRTWITREPAIVYFHSEYWFNVICMFREDGIYYYCNLSSPFVCDEEALKYIDYDLDIKVYPNGKYHLLDEDEYEQHMNQMNYPHDIDIILRRNVDILQQWIEQKKGPFAPDFIKVWNERYKKIRQY.

The Proton donor role is filled by Arg-26. Positions 90, 106, 108, 110, 123, and 126 each coordinate Mg(2+).

It belongs to the Ntdp family. It depends on Mg(2+) as a cofactor.

The enzyme catalyses a ribonucleoside 5'-triphosphate + H2O = a ribonucleoside 5'-diphosphate + phosphate + H(+). It catalyses the reaction a ribonucleoside 5'-diphosphate + H2O = a ribonucleoside 5'-phosphate + phosphate + H(+). Functionally, has nucleoside phosphatase activity towards nucleoside triphosphates and nucleoside diphosphates. The polypeptide is Nucleoside triphosphate/diphosphate phosphatase (Staphylococcus aureus (strain MSSA476)).